Consider the following 434-residue polypeptide: Nicotinate phosphoribosyltransferase (434 aa).

A Phosphohistidine; by autocatalysis modification is found at His-242.

It belongs to the NAPRTase family. In terms of processing, transiently phosphorylated on a His residue during the reaction cycle. Phosphorylation strongly increases the affinity for substrates and increases the rate of nicotinate D-ribonucleotide production. Dephosphorylation regenerates the low-affinity form of the enzyme, leading to product release.

The catalysed reaction is nicotinate + 5-phospho-alpha-D-ribose 1-diphosphate + ATP + H2O = nicotinate beta-D-ribonucleotide + ADP + phosphate + diphosphate. Its pathway is cofactor biosynthesis; NAD(+) biosynthesis; nicotinate D-ribonucleotide from nicotinate: step 1/1. Functionally, catalyzes the synthesis of beta-nicotinate D-ribonucleotide from nicotinate and 5-phospho-D-ribose 1-phosphate at the expense of ATP. The polypeptide is Nicotinate phosphoribosyltransferase (Rhizobium leguminosarum bv. trifolii (strain WSM2304)).